The primary structure comprises 170 residues: RNA pyrophosphohydrolase (170 aa).

Positions 8–151 (PYRPNVGIAL…KKALYAELIP (144 aa)) constitute a Nudix hydrolase domain. Positions 42-63 (GGIDEGETPQVAALREMGEEIG) match the Nudix box motif.

It belongs to the Nudix hydrolase family. RppH subfamily. The cofactor is a divalent metal cation.

In terms of biological role, accelerates the degradation of transcripts by removing pyrophosphate from the 5'-end of triphosphorylated RNA, leading to a more labile monophosphorylated state that can stimulate subsequent ribonuclease cleavage. The polypeptide is RNA pyrophosphohydrolase (Gluconobacter oxydans (strain 621H) (Gluconobacter suboxydans)).